The sequence spans 149 residues: Protein-export protein SecB (149 aa).

This sequence belongs to the SecB family. Homotetramer, a dimer of dimers. One homotetramer interacts with 1 SecA dimer.

It localises to the cytoplasm. In terms of biological role, one of the proteins required for the normal export of preproteins out of the cell cytoplasm. It is a molecular chaperone that binds to a subset of precursor proteins, maintaining them in a translocation-competent state. It also specifically binds to its receptor SecA. In Hydrogenovibrio crunogenus (strain DSM 25203 / XCL-2) (Thiomicrospira crunogena), this protein is Protein-export protein SecB.